We begin with the raw amino-acid sequence, 288 residues long: 4-hydroxybenzoate octaprenyltransferase (288 aa).

7 consecutive transmembrane segments (helical) span residues 38–58, 98–120, 141–161, 163–183, 213–233, 238–258, and 268–288; these read IAAQ…GVFL, ILFA…MTIW, LLQV…FSAV, ESLP…SVIY, LIIG…GSLA, VYYI…KLMV, and AFLN…LSYL.

The protein belongs to the UbiA prenyltransferase family. Mg(2+) is required as a cofactor.

The protein localises to the cell inner membrane. The enzyme catalyses all-trans-octaprenyl diphosphate + 4-hydroxybenzoate = 4-hydroxy-3-(all-trans-octaprenyl)benzoate + diphosphate. It functions in the pathway cofactor biosynthesis; ubiquinone biosynthesis. Its function is as follows. Catalyzes the prenylation of para-hydroxybenzoate (PHB) with an all-trans polyprenyl group. Mediates the second step in the final reaction sequence of ubiquinone-8 (UQ-8) biosynthesis, which is the condensation of the polyisoprenoid side chain with PHB, generating the first membrane-bound Q intermediate 3-octaprenyl-4-hydroxybenzoate. The polypeptide is 4-hydroxybenzoate octaprenyltransferase (Providencia stuartii).